The following is a 165-amino-acid chain: C-phycoerythrin class 2 subunit alpha (165 aa).

Phycourobilin contacts are provided by Cys75, Cys83, and Cys140.

This sequence belongs to the phycobiliprotein family. As to quaternary structure, heterodimer of an alpha and a beta chain. Contains three covalently linked phycourobilin chromophores.

The protein resides in the cellular thylakoid membrane. Light-harvesting photosynthetic bile pigment-protein from the phycobiliprotein complex. The sequence is that of C-phycoerythrin class 2 subunit alpha (mpeA) from Synechococcus sp. (strain WH8103).